The sequence spans 74 residues: Large ribosomal subunit protein bL31 (74 aa).

Belongs to the bacterial ribosomal protein bL31 family. Type A subfamily. As to quaternary structure, part of the 50S ribosomal subunit.

In terms of biological role, binds the 23S rRNA. The sequence is that of Large ribosomal subunit protein bL31 from Phenylobacterium zucineum (strain HLK1).